Here is a 276-residue protein sequence, read N- to C-terminus: MNTETTSVRKFRSANIHIYGKCNYRCEHCFDRCLTKNYMRPSDWVDTLTFLKEYGVEKINLAGGEPTLYPFLDQMCYLVKGMGFKLSIVSNGSLITEDWMARMEGVVDWIGLSIDSIDEADEIQIGRGRGGHLENIVQVADMAHRHGIKVKLNITVVRRSWMKDFRPFIEKVRPERVKCFRALTLKNANDDVPDTWSITDKQFEDFRRRHEDIGCIVFEDNEDMVSSYVMFDPMGRWMVDSGYEKRFISFEVLRREGLDREVDVEKYFGRNAVYEW.

Residues 6–216 enclose the Radical SAM core domain; that stretch reads TSVRKFRSAN…RRRHEDIGCI (211 aa). [4Fe-4S] cluster-binding residues include Cys22, Cys26, and Cys29.

It belongs to the radical SAM superfamily. Viperin family. Requires [4Fe-4S] cluster as cofactor.

The catalysed reaction is CTP + AH2 + S-adenosyl-L-methionine = 3'-deoxy-3',4'-didehydro-CTP + 5'-deoxyadenosine + L-methionine + A + H2O + H(+). Expression of pVip50 in E.coli (strain MG1655) confers resistance to phage P1; has no effect against T7. Catalyzes the conversion of cytosine triphosphate (CTP) to 3'-deoxy-3',4'-didehydro-CTP (ddhCTP), probably via a SAM-dependent radical mechanism. The modified nucleotide represses transcription from T7 RNA polymerase-directed genes (possibly by acting as chain terminators), strongly suggesting these nucleotides block viral polymerase transcription. How this protein allows bacteria to resist viruses that do not encode their own RNA polymerase (such as lambda, P1) is unknown. This Thermoplasmatales archaeon (strain ISO4-H5) protein is S-adenosylmethionine-dependent nucleotide dehydratase.